The primary structure comprises 499 residues: Glycerol kinase (499 aa).

ADP is bound at residue threonine 13. Threonine 13, threonine 14, and serine 15 together coordinate ATP. Residue threonine 13 coordinates sn-glycerol 3-phosphate. Position 17 (arginine 17) interacts with ADP. Residues arginine 83, glutamate 84, tyrosine 135, and aspartate 245 each coordinate sn-glycerol 3-phosphate. Glycerol is bound by residues arginine 83, glutamate 84, tyrosine 135, aspartate 245, and glutamine 246. ADP-binding residues include threonine 267 and glycine 310. ATP-binding residues include threonine 267, glycine 310, glutamine 314, and glycine 411. 2 residues coordinate ADP: glycine 411 and asparagine 415.

Belongs to the FGGY kinase family. Homotetramer and homodimer (in equilibrium).

The enzyme catalyses glycerol + ATP = sn-glycerol 3-phosphate + ADP + H(+). The protein operates within polyol metabolism; glycerol degradation via glycerol kinase pathway; sn-glycerol 3-phosphate from glycerol: step 1/1. Its activity is regulated as follows. Activated by phosphorylation and inhibited by fructose 1,6-bisphosphate (FBP). Functionally, key enzyme in the regulation of glycerol uptake and metabolism. Catalyzes the phosphorylation of glycerol to yield sn-glycerol 3-phosphate. This Halothermothrix orenii (strain H 168 / OCM 544 / DSM 9562) protein is Glycerol kinase.